The chain runs to 1196 residues: Protein BRASSINOSTEROID INSENSITIVE 1 (1196 aa).

The first 23 residues, 1 to 23 (MKTFSSFFLSVTTLFFFSFFSLS), serve as a signal peptide directing secretion. The short motif at 62 to 69 (CTFDGVTC) is the Cys pair 1 element. LRR repeat units follow at residues 71–98 (DDKV…LLSL), 99–121 (TGLE…FKCS), 122–146 (ASLT…SLGS), 148–169 (SGLK…VSGG), 172–197 (LNSL…VLSD), 199–221 (CGEL…VSRC), 222–244 (VNLE…LGDC), 245–268 (SALQ…ISTC), 269–290 (TELK…PLPL), 291–314 (KSLQ…LSGA), 316–338 (DTLT…FFGS), 339–363 (CSLL…TLLK), 364–388 (MRGL…LTNL), 390–413 (ASLL…LCQN), 415–439 (KNTL…LSNC), 441–463 (ELVS…LGSL), 464–487 (SKLR…LMYV), 488–511 (KTLE…LSNC), 513–535 (NLNW…IGRL), 536–559 (ENLA…LGDC), and 561–583 (SLIW…MFKQ). Asn-112 is a glycosylation site (N-linked (GlcNAc...) asparagine). Asn-154 carries N-linked (GlcNAc...) asparagine glycosylation. Asn-233 carries N-linked (GlcNAc...) asparagine glycosylation. N-linked (GlcNAc...) asparagine glycosylation is present at Asn-275. N-linked (GlcNAc...) asparagine glycosylation is found at Asn-351, Asn-387, Asn-401, and Asn-438. A glycan (N-linked (GlcNAc...) asparagine) is linked at Asn-510. N-linked (GlcNAc...) asparagine glycosylation is found at Asn-545 and Asn-573. Tyr-597 contributes to the brassinolide binding site. N-linked (GlcNAc...) asparagine glycosylation is present at Asn-636. The tract at residues 640–642 (RVY) is SERK1 binding. Residues Tyr-642 and Ser-647 each contribute to the brassinolide site. Residue Asn-653 is glycosylated (N-linked (GlcNAc...) asparagine). LRR repeat units lie at residues 653-677 (NGSM…IGSM), 678-701 (PYLF…VGDL), 702-725 (RGLN…MSAL), and 727-750 (MLTE…QFET). Asn-705 contacts brassinolide. The segment at 726–729 (TMLT) is SERK1 binding. An N-linked (GlcNAc...) asparagine glycan is attached at Asn-737. The tract at residues 746 to 750 (GQFET) is SERK1 binding. Positions 763-770 (CGYPLPRC) match the Cys pair 2 motif. The chain crosses the membrane as a helical span at residues 793–813 (AGSVAMGLLFSFVCIFGLILV). At Tyr-831 the chain carries Phosphotyrosine. Residue Ser-838 is modified to Phosphoserine. Thr-842, Thr-846, and Thr-851 each carry phosphothreonine. Phosphoserine is present on Ser-858. Phosphothreonine is present on residues Thr-872 and Thr-880. The Protein kinase domain occupies 883 to 1158 (FHNDSLIGSG…VQVMAMFKEI (276 aa)). Residues Ser-887 and Ser-891 each carry the phosphoserine modification. ATP-binding positions include 889–897 (IGSGGFGDV) and Lys-911. Residue Tyr-956 is modified to Phosphotyrosine. ATP-binding positions include 957 to 959 (EFM) and 963 to 966 (SLED). Ser-981 carries the post-translational modification Phosphoserine. Thr-982 bears the Phosphothreonine mark. Catalysis depends on Asp-1009, which acts as the Proton acceptor. Residues 1009–1014 (DMKSSN) and Asp-1027 contribute to the ATP site. Ser-1035 is modified (phosphoserine). Thr-1039 is modified (phosphothreonine). Phosphoserine occurs at positions 1042 and 1044. 2 positions are modified to phosphothreonine: Thr-1045 and Thr-1049. Residue Tyr-1052 is modified to Phosphotyrosine. Ser-1060 is modified (phosphoserine). Tyr-1072 carries the post-translational modification Phosphotyrosine. Ser-1166 and Ser-1168 each carry phosphoserine. Thr-1169 carries the phosphothreonine modification. 2 positions are modified to phosphoserine: Ser-1172 and Ser-1179. Thr-1180 carries the phosphothreonine modification. Position 1187 is a phosphoserine (Ser-1187).

It belongs to the protein kinase superfamily. Ser/Thr protein kinase family. As to quaternary structure, monomer or homodimer in the plasma membrane. Heterodimer with BAK1 in the endosomes. Interacts with SERK1 and TTL in a kinase-dependent manner. Bind to SERK1 in a brassinolide-dependent manner. Component of the SERK1 signaling complex, composed of KAPP, CDC48A, GRF6 or GRF7, SERK1, SERK2, SERK3/BAK1 and BRI1. Interacts with CDG1. No interactions with PSKR1 or CNGC17. Interacts with BIK1. Interacts with B'ALPHA, B'BETA, B'GAMMA and B'ETA. Interacts with BSK1 and BSK3. Interacts with BSK5, BSK6 and BSK11. Autophosphorylated on Tyr-831, Tyr-956 and maybe Tyr-1072. Phosphorylated on at least 12 sites, with a preference for Ser residues. Transphosphorylated on Ser-887 by SERK1 and on Ser-838, Thr-846, Ser-858 and Ser-1166 by BAK1. Phosphorylation on Ser-1166 enhances the kinase activity. Post-translationally, glycosylated. Expressed ubiquitously.

It is found in the cell membrane. The protein localises to the endosome membrane. The enzyme catalyses L-seryl-[protein] + ATP = O-phospho-L-seryl-[protein] + ADP + H(+). It catalyses the reaction L-threonyl-[protein] + ATP = O-phospho-L-threonyl-[protein] + ADP + H(+). It carries out the reaction L-tyrosyl-[protein] + ATP = O-phospho-L-tyrosyl-[protein] + ADP + H(+). With respect to regulation, activated by Ser and Thr phosphorylation. Receptor with a dual specificity kinase activity acting on both serine/threonine- and tyrosine-containing substrates. Regulates, in response to brassinosteroid binding, a signaling cascade involved in plant development, including expression of light- and stress-regulated genes, promotion of cell elongation, normal leaf and chloroplast senescence, and flowering. Binds brassinolide (BL), and less effectively castasterone (CS), but not 2,3,22,23-O-tetramethylbrassinolide or ecdysone. May be involved in a feedback regulation of brassinosteroid biosynthesis. Phosphorylates BRI1-associated receptor kinase 1 (BAK1), Transthyretin-Like protein (TTL) and SERK1 on 'Ser-299' and 'Thr-462' in vitro. May have a guanylyl cyclase activity. Phosphorylates BSK1, BSK2 and BSK3 in vitro. Phosphorylates BSK1, BSK3, BSK5, BSK6, BSK8 and BSK11 in vitro. The chain is Protein BRASSINOSTEROID INSENSITIVE 1 from Arabidopsis thaliana (Mouse-ear cress).